The primary structure comprises 368 residues: Homoserine O-acetyltransferase (368 aa).

The AB hydrolase-1 domain occupies 41-352 (NVILITHALS…DYGHDSFLVE (312 aa)). Ser147 acts as the Nucleophile in catalysis. Arg219 serves as a coordination point for substrate. Residues Asp313 and His346 contribute to the active site. A substrate-binding site is contributed by Asp347.

It belongs to the AB hydrolase superfamily. MetX family. Homodimer.

The protein resides in the cytoplasm. It carries out the reaction L-homoserine + acetyl-CoA = O-acetyl-L-homoserine + CoA. It functions in the pathway amino-acid biosynthesis; L-methionine biosynthesis via de novo pathway; O-acetyl-L-homoserine from L-homoserine: step 1/1. Its function is as follows. Transfers an acetyl group from acetyl-CoA to L-homoserine, forming acetyl-L-homoserine. This chain is Homoserine O-acetyltransferase, found in Nautilia profundicola (strain ATCC BAA-1463 / DSM 18972 / AmH).